The following is a 473-amino-acid chain: P3 protein (473 aa).

9 helical membrane passes run 25-45 (FVGM…AQVM), 221-241 (PMLL…FLMA), 249-269 (ALAL…SYLF), 277-297 (VTLA…FLPL), 316-336 (ISKI…GVVI), 356-376 (FILL…ILVG), 381-401 (IVLV…SLAI), 413-433 (VSIE…QLSL), and 446-466 (FIVA…QFIY).

The protein belongs to the bile acid:sodium symporter (BASS) (TC 2.A.28) family.

Its subcellular location is the membrane. The ubiquitous expression and the conservation of the sequence in distant animal species suggest that the gene codes for a protein with housekeeping functions. The chain is P3 protein (Slc10a3) from Mus musculus (Mouse).